The following is a 297-amino-acid chain: Coiled-coil domain-containing protein 159 (297 aa).

Residues 147–297 (EELELVREEV…SKSGRSFPPA (151 aa)) are a coiled coil. The tract at residues 256–297 (LRGHKGHQCLSPPLPSWDSDSDCDQDLSQPPFSKSGRSFPPA) is disordered.

In terms of assembly, interacts with DYNLT2. Interacts with GGNBP1. Interacts with OSBP2.

Functionally, functions during spermatid development; may participate in the centrosome reduction procedure of spermatids and is required for the formation of the connecting piece/sperm head-tail coupling apparatus (HTCA) and the correct and tight attachment of the flagellum to the nuclear envelope. In Homo sapiens (Human), this protein is Coiled-coil domain-containing protein 159 (CCDC159).